Here is a 230-residue protein sequence, read N- to C-terminus: MAKNKRLTAAQATVERNKPYGLSEAVALVKSNAKAKFDETIEISLNLGIDPRHADQMVRGLISLPNGTGKTLRVGVFARGPKAEEALAAGAEVVGAEDLAEKIQAGEIDFDRCIATPDMMALVGRLGKILGPRGLMPNPRLGTVTMDVKGAITAAKSGQVEYRAEKAGIIHAGVGKASFDEAKLVENINALVDAVQKARPTGAKGTYLKKAALSSTMGPGVRVDVASFEA.

The protein belongs to the universal ribosomal protein uL1 family. As to quaternary structure, part of the 50S ribosomal subunit.

Its function is as follows. Binds directly to 23S rRNA. The L1 stalk is quite mobile in the ribosome, and is involved in E site tRNA release. Functionally, protein L1 is also a translational repressor protein, it controls the translation of the L11 operon by binding to its mRNA. In Gluconobacter oxydans (strain 621H) (Gluconobacter suboxydans), this protein is Large ribosomal subunit protein uL1.